Here is a 44-residue protein sequence, read N- to C-terminus: Small ribosomal subunit protein eS31 (44 aa).

Zn(2+)-binding residues include Cys18, Cys21, Cys35, and Cys38. A C4-type zinc finger spans residues 18 to 38 (CPRCGDTVLAEHEDRQHCGKC).

The protein belongs to the eukaryotic ribosomal protein eS31 family. Part of the 30S ribosomal subunit. Zn(2+) serves as cofactor.

This chain is Small ribosomal subunit protein eS31, found in Haloarcula marismortui (strain ATCC 43049 / DSM 3752 / JCM 8966 / VKM B-1809) (Halobacterium marismortui).